A 116-amino-acid chain; its full sequence is Ferredoxin-thioredoxin reductase, catalytic chain (116 aa).

C57 lines the [4Fe-4S] cluster pocket. The active-site Nucleophile is the C59. A disulfide bond links C59 and C89. [4Fe-4S] cluster is bound by residues C76, C78, and C87.

It belongs to the ferredoxin thioredoxin reductase beta subunit family. Heterodimer of subunit A (variable subunit) and subunit B (catalytic subunit). Heterodimeric FTR forms a complex with ferredoxin and thioredoxin. Requires [4Fe-4S] cluster as cofactor.

It is found in the plastid. The protein localises to the chloroplast. It catalyses the reaction [thioredoxin]-disulfide + 2 reduced [2Fe-2S]-[ferredoxin] + 2 H(+) = [thioredoxin]-dithiol + 2 oxidized [2Fe-2S]-[ferredoxin]. Functionally, catalytic subunit of the ferredoxin-thioredoxin reductase (FTR), which catalyzes the two-electron reduction of thioredoxins by the electrons provided by reduced ferredoxin. This is Ferredoxin-thioredoxin reductase, catalytic chain (ftrB) from Pyropia yezoensis (Susabi-nori).